Reading from the N-terminus, the 96-residue chain is Fluoride-specific ion channel FluC 1 (96 aa).

2 consecutive transmembrane segments (helical) span residues 4–24 and 26–46; these read LIQG…RLAL and LWLG…AFLM. Na(+)-binding residues include Gly-61 and Thr-64. Residues 69 to 89 traverse the membrane as a helical segment; it reads MMLNDVSFYFFTAVGCILAWL.

Belongs to the fluoride channel Fluc/FEX (TC 1.A.43) family.

The protein resides in the cell membrane. It catalyses the reaction fluoride(in) = fluoride(out). With respect to regulation, na(+) is not transported, but it plays an essential structural role and its presence is essential for fluoride channel function. Fluoride-specific ion channel. Important for reducing fluoride concentration in the cell, thus reducing its toxicity. This chain is Fluoride-specific ion channel FluC 1, found in Corynebacterium glutamicum (strain ATCC 13032 / DSM 20300 / JCM 1318 / BCRC 11384 / CCUG 27702 / LMG 3730 / NBRC 12168 / NCIMB 10025 / NRRL B-2784 / 534).